The primary structure comprises 118 residues: Basic phospholipase A2 PA-11 (118 aa).

7 cysteine pairs are disulfide-bonded: Cys11–Cys71, Cys27–Cys117, Cys29–Cys45, Cys44–Cys98, Cys51–Cys91, Cys60–Cys84, and Cys78–Cys89. Ca(2+) contacts are provided by Tyr28, Gly30, and Gly32. The active site involves His48. A Ca(2+)-binding site is contributed by Asp49. The active site involves Asp92.

Belongs to the phospholipase A2 family. Group I subfamily. D49 sub-subfamily. It depends on Ca(2+) as a cofactor. As to expression, expressed by the venom gland.

The protein localises to the secreted. The catalysed reaction is a 1,2-diacyl-sn-glycero-3-phosphocholine + H2O = a 1-acyl-sn-glycero-3-phosphocholine + a fatty acid + H(+). Its function is as follows. PLA2 catalyzes the calcium-dependent hydrolysis of the 2-acyl groups in 3-sn-phosphoglycerides. The chain is Basic phospholipase A2 PA-11 from Pseudechis australis (Mulga snake).